The chain runs to 1263 residues: MKEISCGRRTRVSFGKSREPLPIPDLVEIQKISYRRFLEEGLLEVLKKFSPIYSQATRSDLKKSDRGFALEFVSTRIGEPVVDPLECKAKGLTYSVPIYATARLTDMKSGEMKEEEVFLGYIPYMTDRGTFIINGAERVVVNQIVVSPGLYFSSEYIDREEYGGYFLPSRGAWLEVILDPYDGVLYAGLDGKKVNLFLFLKTIGYEKDEDILSLYPTYLDADDEDSLLLHVGSILLEDIYDGDRKIAEKWDILTKDLAERILMIDDINQIKIVHPIAQNTFEKMLELVSSSGEEGEEEEEKTKIYGLNEVTVVDAYLEIFRRLRPEELPRINAAKRYLHDLFFNPERYDLSEVGRYKVNERLRNAYIRYLIEVEGEDPEEARKKVYNETSLVLKPLDIVLASRILFDYFERRYVNDFEIDSYELKNLIRIFKEEYLEKRKTAPYDLRKLVSVFRRNYGVTSDLGVFAAIRYVSNINKELPSIPFDTKDHLGNKRVRTVGELVQREFERLFARAQKAIQERLTLINSLSKVSIQSLINIKSIISTVNQFFAMNQLSQFMDQVNPLSELTHKRRVSAVGPGGLRRESKVFEARNVHYSQYGRLCPIETPEGANIGFITSLAIYAKIDEYGFLMTPYRKVVNGKVTDEVVYLRANEEEEYKIIPATTPVDEEGNIIPERVVARMGEDIRLVPKEEVDFMDVSTKQPFSVSASLIPFLEHDDASRALMGSNMQRQAVPLLKTEAPLVGTGMEWEAAKNSGYVVLAEHDGIVKEVDAARVVVHRTDENGNLMYDDKGNPVVDEYRLLKFVRSNQDTMINQKPIVNEGDFVKKGDPIADGPATDMGELALGRNILVAFMPWEGYNYEDAILVSQELLEEDVFTSIHIEVYETQARETRLGPEEITADIPNVSKELLKNLDENGIIRVGAYVVSDYGVGSQAILVGKVTPKGEGDTTPEEKIIRSVFGERGRDVKDTSLRLPHGVEGRVIRVDVYDQNDIAELGAGVLKLVRVYVASRKTLDIGDKLAGRHGNKGVVSNILPKEDMPFLPDGTPVQMVLNPLGIPSRMNVGQILETHLGWLAKLTGKWFATPVFEGAKEDEILRPLYEERKKRGLHLGDDENNPNGKVVLRDGRTGEPFDNPVVVGYMYMLKLIHIAKEKIHARSTGPYSLIHQQPLGGKSHFGGQRLGEMEVWALEAYGAAHTLAEMLTIKSDDIKGRNEAYKAILKNMNIPEPGVPESFRVLIKELRGLALDVRLYDENGNEIDIDKY.

This sequence belongs to the RNA polymerase beta chain family. The RNAP catalytic core consists of 2 alpha, 1 beta, 1 beta' and 1 omega subunit. When a sigma factor is associated with the core the holoenzyme is formed, which can initiate transcription.

The catalysed reaction is RNA(n) + a ribonucleoside 5'-triphosphate = RNA(n+1) + diphosphate. Its function is as follows. DNA-dependent RNA polymerase catalyzes the transcription of DNA into RNA using the four ribonucleoside triphosphates as substrates. The sequence is that of DNA-directed RNA polymerase subunit beta from Thermotoga sp. (strain RQ2).